A 255-amino-acid polypeptide reads, in one-letter code: Putative SET domain-containing protein L678 (255 aa).

An SET domain is found at 5 to 176; sequence NRISEVFIKK…TGEELTDNYV (172 aa). The disordered stretch occupies residues 235-255; it reads LQQNSKNLKKNPKKTIKATPK.

Belongs to the class V-like SAM-binding methyltransferase superfamily.

This chain is Putative SET domain-containing protein L678, found in Acanthamoeba polyphaga mimivirus (APMV).